The primary structure comprises 293 residues: Putative DNA glycosylase At3g47830 (293 aa).

Positions 1–10 (MSKAQKRKRL) are enriched in basic residues. A disordered region spans residues 1–34 (MSKAQKRKRLNKYDGESKTPANKSTVDGGNPYPT). Residues Asn108 and Lys151 each coordinate DNA. The active-site Schiff-base intermediate with DNA is the Lys196. Residues His216 and Asp232 each contribute to the DNA site.

Belongs to the DNA glycosylase family.

The sequence is that of Putative DNA glycosylase At3g47830 from Arabidopsis thaliana (Mouse-ear cress).